A 237-amino-acid polypeptide reads, in one-letter code: Concanavalin V (237 aa).

Mn(2+) contacts are provided by Glu-8 and Asp-10. Residues Asp-10, Tyr-12, Asn-14, and Asp-19 each contribute to the Ca(2+) site. Residue Asn-14 participates in a carbohydrate binding. Residues Asp-19 and His-24 each contribute to the Mn(2+) site. A carbohydrate is bound by residues Gly-70, 98-100, Asp-208, and Arg-228; that span reads GLY.

This sequence belongs to the leguminous lectin family. Homotetramer. Post-translationally, concanavalin A-like lectins of the Diocleinae subtribe undergo proteolytic processing referred to as circular permutation. The propeptide is split into an N-terminal and a C-terminal part, the gamma and beta chain, respectively. These are then religated in beta-gamma order to form the mature alpha chain. The beta and gamma chains can often be detected in cell extracts. Residues 1-118 of the mature chain, as displayed here, probably constitute the beta chain in the propeptide, residues 119-237 the gamma chain.

D-mannose/D-glucose-binding lectin which binds alpha-methyl-D-mannoside, D-mannose and D-glucose in that order. Also binds to serum fetuin and ovalbumin. Has hemagglutinating activity towards rabbit erythrocytes. Is not toxic towards larvae of the brine shrimp Artemia. Induces relaxation in rat endothelized aorta. Shows a transient edematogenic effect in rat. This chain is Concanavalin V, found in Canavalia cathartica (Jackbean).